A 329-amino-acid chain; its full sequence is Phosphate acyltransferase (329 aa).

It belongs to the PlsX family. In terms of assembly, homodimer. Probably interacts with PlsY.

The protein resides in the cytoplasm. The catalysed reaction is a fatty acyl-[ACP] + phosphate = an acyl phosphate + holo-[ACP]. Its pathway is lipid metabolism; phospholipid metabolism. Catalyzes the reversible formation of acyl-phosphate (acyl-PO(4)) from acyl-[acyl-carrier-protein] (acyl-ACP). This enzyme utilizes acyl-ACP as fatty acyl donor, but not acyl-CoA. The protein is Phosphate acyltransferase of Campylobacter lari (strain RM2100 / D67 / ATCC BAA-1060).